The sequence spans 136 residues: Nucleoside diphosphate kinase (136 aa).

6 residues coordinate ATP: K10, F58, R86, T92, R104, and N114. The active-site Pros-phosphohistidine intermediate is H117.

This sequence belongs to the NDK family. In terms of assembly, homotetramer. It depends on Mg(2+) as a cofactor.

Its subcellular location is the cytoplasm. The enzyme catalyses a 2'-deoxyribonucleoside 5'-diphosphate + ATP = a 2'-deoxyribonucleoside 5'-triphosphate + ADP. It carries out the reaction a ribonucleoside 5'-diphosphate + ATP = a ribonucleoside 5'-triphosphate + ADP. Major role in the synthesis of nucleoside triphosphates other than ATP. The ATP gamma phosphate is transferred to the NDP beta phosphate via a ping-pong mechanism, using a phosphorylated active-site intermediate. The chain is Nucleoside diphosphate kinase from Mycolicibacterium gilvum (strain PYR-GCK) (Mycobacterium gilvum (strain PYR-GCK)).